We begin with the raw amino-acid sequence, 402 residues long: Metacaspase-1 (402 aa).

The interval 1-79 is disordered; that stretch reads MAYPGQGGHH…FAPPSGPIGP (79 aa). Over residues 23–45 the composition is skewed to low complexity; it reads PAPHGYAQPGYGYAPPSGPPQGY. Active-site residues include H193 and C249.

This sequence belongs to the peptidase C14B family.

Involved in cell death (apoptosis). The polypeptide is Metacaspase-1 (MCA1) (Mycosarcoma maydis (Corn smut fungus)).